The chain runs to 328 residues: Beta-ketoacyl-[acyl-carrier-protein] synthase III (328 aa).

Catalysis depends on residues cysteine 122 and histidine 255. Residues glutamine 256–arginine 260 are ACP-binding. Asparagine 285 is a catalytic residue.

Belongs to the thiolase-like superfamily. FabH family. In terms of assembly, homodimer.

The protein localises to the cytoplasm. It carries out the reaction malonyl-[ACP] + acetyl-CoA + H(+) = 3-oxobutanoyl-[ACP] + CO2 + CoA. It functions in the pathway lipid metabolism; fatty acid biosynthesis. Catalyzes the condensation reaction of fatty acid synthesis by the addition to an acyl acceptor of two carbons from malonyl-ACP. Catalyzes the first condensation reaction which initiates fatty acid synthesis and may therefore play a role in governing the total rate of fatty acid production. Possesses both acetoacetyl-ACP synthase and acetyl transacylase activities. Its substrate specificity determines the biosynthesis of branched-chain and/or straight-chain of fatty acids. The sequence is that of Beta-ketoacyl-[acyl-carrier-protein] synthase III from Herminiimonas arsenicoxydans.